Consider the following 709-residue polypeptide: FACT complex subunit SSRP1 (709 aa).

Ala-2 bears the N-acetylalanine mark. Residue Lys-90 forms a Glycyl lysine isopeptide (Lys-Gly) (interchain with G-Cter in SUMO2) linkage. Thr-170 is subject to Phosphothreonine. N6-acetyllysine is present on Lys-233. Residues Lys-296 and Lys-364 each participate in a glycyl lysine isopeptide (Lys-Gly) (interchain with G-Cter in SUMO2) cross-link. An N6-acetyllysine modification is found at Lys-413. A Phosphotyrosine modification is found at Tyr-441. Ser-444 is subject to Phosphoserine. Tyr-452 bears the Phosphotyrosine mark. The segment at 458–709 (EEGKIREENA…SEDSASGSDE (252 aa)) is disordered. Residues 470-496 (SSDDSGEETDESFNPGEEEEDVAEEFD) are compositionally biased toward acidic residues. Ser-471 is subject to Phosphoserine. Over residues 497–507 (SNASASSSSNE) the composition is skewed to low complexity. At Ser-510 the chain carries Phosphoserine; by CK2. Positions 515 to 533 (KKRKQLKRAKMAKDRKSRK) are enriched in basic residues. 2 stretches are compositionally biased toward basic and acidic residues: residues 534–546 (KSSEGKKGKDPNA) and 577–624 (LSKK…SSKR). N6-acetyllysine is present on Lys-542. Residues 547-615 (PKRPMSAYML…EYEKAMKEYE (69 aa)) constitute a DNA-binding region (HMG box). Positions 625–634 (DKSKKKKKVK) are enriched in basic residues. Residues 643 to 659 (PSRGSSSKSSSRQLSDS) show a composition bias toward low complexity. Ser-657 carries the phosphoserine; by CK2 modification. Phosphoserine is present on residues Ser-659, Ser-667, Ser-668, Ser-671, Ser-672, and Ser-673. Ser-688 is subject to Phosphoserine; by CK2. The segment covering 696-709 (TPPSSEDSASGSDE) has biased composition (polar residues).

Belongs to the SSRP1 family. In terms of assembly, interacts with MYOG (via C-terminal region). Component of the FACT complex, a stable heterodimer of SSRP1 and SUPT16H. Also a component of a CK2-SPT16-SSRP1 complex which forms following UV irradiation, composed of SSRP1, SUPT16H, CSNK2A1, CSNK2A2 and CSNK2B. Binds to histone H3-H4 tetramers, but not to intact nucleosomes. Identified in a centromere complex containing histones H2A, H2B and H4, and at least CENPA, CENPB, CENPC, CENPT, CENPN, HJURP, SUPT16H, SSRP1 and RSF1. Interacts with isoform gamma of TP63. Interacts with FYTTD1/UIF. Interacts with SRF. Interacts with NEK9. In terms of processing, phosphorylated by CK2 following UV but not gamma irradiation. Phosphorylation inhibits its DNA-binding activity. Post-translationally, ubiquitinated. Polyubiquitinated following caspase cleavage resulting in degradation of the N-terminal ubiquitinated part of the cleaved protein. Sumoylated.

The protein localises to the nucleus. The protein resides in the chromosome. It localises to the nucleolus. Functionally, component of the FACT complex, a general chromatin factor that acts to reorganize nucleosomes. The FACT complex is involved in multiple processes that require DNA as a template such as mRNA elongation, DNA replication and DNA repair. During transcription elongation the FACT complex acts as a histone chaperone that both destabilizes and restores nucleosomal structure. It facilitates the passage of RNA polymerase II and transcription by promoting the dissociation of one histone H2A-H2B dimer from the nucleosome, then subsequently promotes the reestablishment of the nucleosome following the passage of RNA polymerase II. The FACT complex is probably also involved in phosphorylation of 'Ser-392' of p53/TP53 via its association with CK2 (casein kinase II). Binds specifically to double-stranded DNA and at low levels to DNA modified by the antitumor agent cisplatin. May potentiate cisplatin-induced cell death by blocking replication and repair of modified DNA. Also acts as a transcriptional coactivator for p63/TP63. This chain is FACT complex subunit SSRP1 (Ssrp1), found in Rattus norvegicus (Rat).